Here is a 177-residue protein sequence, read N- to C-terminus: Ribosome rescue factor SmrB (177 aa).

Residues 92 to 167 enclose the Smr domain; that stretch reads LDLHGLTRQK…GDAAILVLIE (76 aa).

Belongs to the SmrB family. In terms of assembly, associates with collided ribosomes, but not with correctly translating polysomes.

In terms of biological role, acts as a ribosome collision sensor. Detects stalled/collided disomes (pairs of ribosomes where the leading ribosome is stalled and a second ribosome has collided with it) and endonucleolytically cleaves mRNA at the 5' boundary of the stalled ribosome. Stalled/collided disomes form a new interface (primarily via the 30S subunits) that binds SmrB. Cleaved mRNA becomes available for tmRNA ligation, leading to ribosomal subunit dissociation and rescue of stalled ribosomes. The protein is Ribosome rescue factor SmrB of Haemophilus ducreyi (strain 35000HP / ATCC 700724).